The following is a 206-amino-acid chain: Large ribosomal subunit protein uL4 (206 aa).

The tract at residues 44 to 77 (RQGTRAQKDRQTVKHSTKKPWRQKGTGRARAGMT) is disordered. Over residues 56-70 (VKHSTKKPWRQKGTG) the composition is skewed to basic residues.

It belongs to the universal ribosomal protein uL4 family. Part of the 50S ribosomal subunit.

Functionally, one of the primary rRNA binding proteins, this protein initially binds near the 5'-end of the 23S rRNA. It is important during the early stages of 50S assembly. It makes multiple contacts with different domains of the 23S rRNA in the assembled 50S subunit and ribosome. Its function is as follows. Forms part of the polypeptide exit tunnel. This Methylibium petroleiphilum (strain ATCC BAA-1232 / LMG 22953 / PM1) protein is Large ribosomal subunit protein uL4.